Consider the following 194-residue polypeptide: IMP cyclohydrolase (194 aa).

It belongs to the archaeal IMP cyclohydrolase family.

It carries out the reaction IMP + H2O = 5-formamido-1-(5-phospho-D-ribosyl)imidazole-4-carboxamide. The protein operates within purine metabolism; IMP biosynthesis via de novo pathway; IMP from 5-formamido-1-(5-phospho-D-ribosyl)imidazole-4-carboxamide: step 1/1. Catalyzes the cyclization of 5-formylamidoimidazole-4-carboxamide ribonucleotide to IMP. This chain is IMP cyclohydrolase, found in Halobacterium salinarum (strain ATCC 29341 / DSM 671 / R1).